The following is a 322-amino-acid chain: uncharacterized protein (322 aa).

This is an uncharacterized protein from Acanthamoeba polyphaga (Amoeba).